Reading from the N-terminus, the 382-residue chain is FK506-binding protein 4 (382 aa).

The interval 139-274 (GLEVDEEIES…KEEPKKKITK (136 aa)) is disordered. Residues 141-173 (EVDEEIESDEEVESDEEIESDEEIESEEEEEEP) are compositionally biased toward acidic residues. Basic and acidic residues-rich tracts occupy residues 180–190 (RPAEEVKEIAS) and 196–270 (EKKE…EPKK). The PPIase FKBP-type domain maps to 295-382 (GQRVGMRYIG…VFDVKLLSMK (88 aa)).

It belongs to the FKBP-type PPIase family. FKBP3/4 subfamily. In terms of assembly, binds to histones H3 and H4.

Its subcellular location is the nucleus. It catalyses the reaction [protein]-peptidylproline (omega=180) = [protein]-peptidylproline (omega=0). Its activity is regulated as follows. Inhibited by both FK506 and rapamycin. Its function is as follows. PPIase that acts as a histone chaperone. Histone proline isomerase that increases the rate of cis-trans isomerization at prolines on the histone H3 N-terminal tail. Proline isomerization influences H3 methylation thereby regulating gene expression. This is FK506-binding protein 4 (FKBP4) from Rhizopus delemar (strain RA 99-880 / ATCC MYA-4621 / FGSC 9543 / NRRL 43880) (Mucormycosis agent).